Reading from the N-terminus, the 405-residue chain is Acetyl-CoA decarbonylase/synthase complex subunit delta (405 aa).

The protein belongs to the CdhD family. As to quaternary structure, heterodimer of delta and gamma chains. The ACDS complex is made up of alpha, epsilon, beta, gamma and delta chains with a probable stoichiometry of (alpha(2)epsilon(2))(4)-beta(8)-(gamma(1)delta(1))(8).

In terms of biological role, part of a complex that catalyzes the reversible cleavage of acetyl-CoA, allowing autotrophic growth from CO(2). Probably maintains the overall quaternary structure of the ACDS complex. The polypeptide is Acetyl-CoA decarbonylase/synthase complex subunit delta (Methanocaldococcus jannaschii (strain ATCC 43067 / DSM 2661 / JAL-1 / JCM 10045 / NBRC 100440) (Methanococcus jannaschii)).